We begin with the raw amino-acid sequence, 240 residues long: Phosphoribosylaminoimidazole-succinocarboxamide synthase (240 aa).

This sequence belongs to the SAICAR synthetase family.

The enzyme catalyses 5-amino-1-(5-phospho-D-ribosyl)imidazole-4-carboxylate + L-aspartate + ATP = (2S)-2-[5-amino-1-(5-phospho-beta-D-ribosyl)imidazole-4-carboxamido]succinate + ADP + phosphate + 2 H(+). It participates in purine metabolism; IMP biosynthesis via de novo pathway; 5-amino-1-(5-phospho-D-ribosyl)imidazole-4-carboxamide from 5-amino-1-(5-phospho-D-ribosyl)imidazole-4-carboxylate: step 1/2. The sequence is that of Phosphoribosylaminoimidazole-succinocarboxamide synthase from Wolbachia pipientis wMel.